Consider the following 354-residue polypeptide: Uroporphyrinogen decarboxylase (354 aa).

Residues 27–31 (RQAGR), Phe46, Asp77, Tyr153, Thr208, and His326 contribute to the substrate site.

This sequence belongs to the uroporphyrinogen decarboxylase family. In terms of assembly, homodimer.

The protein localises to the cytoplasm. It carries out the reaction uroporphyrinogen III + 4 H(+) = coproporphyrinogen III + 4 CO2. It functions in the pathway porphyrin-containing compound metabolism; protoporphyrin-IX biosynthesis; coproporphyrinogen-III from 5-aminolevulinate: step 4/4. In terms of biological role, catalyzes the decarboxylation of four acetate groups of uroporphyrinogen-III to yield coproporphyrinogen-III. This Neisseria meningitidis serogroup B (strain ATCC BAA-335 / MC58) protein is Uroporphyrinogen decarboxylase.